We begin with the raw amino-acid sequence, 69 residues long: Cytoinsectotoxin-2a (69 aa).

This sequence belongs to the cationic peptide 06 (cytoinsectotoxin) family. Expressed by the venom gland.

Its subcellular location is the secreted. Its function is as follows. Insecticidal and antimicrobial peptide. Has insecticidal activity against larvae of flesh fly S.carnaria. Has antibacterial activity against Gram-positive bacterium B.subtilis B-501 (MIC=1.25 uM) and Gram-negative bacterium E.coli DH5alpha (MIC=2.5 uM). The polypeptide is Cytoinsectotoxin-2a (Lachesana tarabaevi (Spider)).